The primary structure comprises 272 residues: ATP phosphoribosyltransferase regulatory subunit (272 aa).

This sequence belongs to the class-II aminoacyl-tRNA synthetase family. HisZ subfamily. Heteromultimer composed of HisG and HisZ subunits.

It localises to the cytoplasm. The protein operates within amino-acid biosynthesis; L-histidine biosynthesis; L-histidine from 5-phospho-alpha-D-ribose 1-diphosphate: step 1/9. Required for the first step of histidine biosynthesis. May allow the feedback regulation of ATP phosphoribosyltransferase activity by histidine. The polypeptide is ATP phosphoribosyltransferase regulatory subunit (Staphylococcus aureus (strain bovine RF122 / ET3-1)).